Reading from the N-terminus, the 432-residue chain is MDKLRIRGGRPLKGSIPISGAKNAALPLMAACLLTDGTLTLANLPHLADITTMANLLAQHGVDIRLNGHAQGGGGSQGRVVELTAATIASTTAPYDLVRKMRASVLVLGPLLARCGQAKVSLPGGCAIGPRPVDLHIKGLQAMGASIEIDGGYVIASAPAGGLRGAEIVFPQVSVGATENLMMAAALAKGETLLVNAAREPEITDLAHCLIAMGAEIEGAGTDRIRIRGRDRLSGAHHTIIPDRIETGTFAMAAAITGGEVELVGARLEHIKSVAKILSGAEIDFEETEAGLRVRRRNGVLLGVDVMTEPFPGFPTDLQAQMMALMCTCTGAAMITESIFENRFMHVPELARMGANITVHGASALVRGVPRLTGAPVMATDLRASVSLVIAGLAAAGETVVNRIYHLDRGYERIEEKLVACGADMERVRETD.

K22–N23 is a phosphoenolpyruvate binding site. A UDP-N-acetyl-alpha-D-glucosamine-binding site is contributed by R102. Catalysis depends on C126, which acts as the Proton donor. 2-(S-cysteinyl)pyruvic acid O-phosphothioketal is present on C126. UDP-N-acetyl-alpha-D-glucosamine contacts are provided by residues R131 to L135, D317, and I339.

Belongs to the EPSP synthase family. MurA subfamily.

It localises to the cytoplasm. It catalyses the reaction phosphoenolpyruvate + UDP-N-acetyl-alpha-D-glucosamine = UDP-N-acetyl-3-O-(1-carboxyvinyl)-alpha-D-glucosamine + phosphate. The protein operates within cell wall biogenesis; peptidoglycan biosynthesis. Its function is as follows. Cell wall formation. Adds enolpyruvyl to UDP-N-acetylglucosamine. This chain is UDP-N-acetylglucosamine 1-carboxyvinyltransferase, found in Rhodospirillum centenum (strain ATCC 51521 / SW).